The primary structure comprises 211 residues: ATP phosphoribosyltransferase (211 aa).

The protein belongs to the ATP phosphoribosyltransferase family. Short subfamily. Heteromultimer composed of HisG and HisZ subunits.

Its subcellular location is the cytoplasm. The catalysed reaction is 1-(5-phospho-beta-D-ribosyl)-ATP + diphosphate = 5-phospho-alpha-D-ribose 1-diphosphate + ATP. It functions in the pathway amino-acid biosynthesis; L-histidine biosynthesis; L-histidine from 5-phospho-alpha-D-ribose 1-diphosphate: step 1/9. Its function is as follows. Catalyzes the condensation of ATP and 5-phosphoribose 1-diphosphate to form N'-(5'-phosphoribosyl)-ATP (PR-ATP). Has a crucial role in the pathway because the rate of histidine biosynthesis seems to be controlled primarily by regulation of HisG enzymatic activity. This chain is ATP phosphoribosyltransferase, found in Pseudomonas paraeruginosa (strain DSM 24068 / PA7) (Pseudomonas aeruginosa (strain PA7)).